A 400-amino-acid chain; its full sequence is Enolase (400 aa).

Residue glutamine 154 coordinates (2R)-2-phosphoglycerate. The Proton donor role is filled by glutamate 197. Positions 233, 274, and 301 each coordinate Mg(2+). Positions 326, 355, 356, and 377 each coordinate (2R)-2-phosphoglycerate. The active-site Proton acceptor is lysine 326.

This sequence belongs to the enolase family. The cofactor is Mg(2+).

The protein resides in the cytoplasm. The protein localises to the secreted. It is found in the cell surface. The catalysed reaction is (2R)-2-phosphoglycerate = phosphoenolpyruvate + H2O. The protein operates within carbohydrate degradation; glycolysis; pyruvate from D-glyceraldehyde 3-phosphate: step 4/5. In terms of biological role, catalyzes the reversible conversion of 2-phosphoglycerate (2-PG) into phosphoenolpyruvate (PEP). It is essential for the degradation of carbohydrates via glycolysis. The polypeptide is Enolase (Picrophilus torridus (strain ATCC 700027 / DSM 9790 / JCM 10055 / NBRC 100828 / KAW 2/3)).